Reading from the N-terminus, the 140-residue chain is MERTLTILKPDCVKKQLIGAVINQIERAGFRVVAMKKTRLTKETAGEFYAVHRERPFYGELVDFMSSGPCVPMILEKANAVADFRTLIGATDPAEAAEGTVRKLYADSKGENIVHGSDSAENAAVEAGFFFAAEEVVRSN.

6 residues coordinate ATP: Lys-9, Phe-57, Arg-85, Thr-91, Arg-102, and Asn-112. Residue His-115 is the Pros-phosphohistidine intermediate of the active site.

Belongs to the NDK family. As to quaternary structure, homotetramer. Mg(2+) serves as cofactor.

It localises to the cytoplasm. It catalyses the reaction a 2'-deoxyribonucleoside 5'-diphosphate + ATP = a 2'-deoxyribonucleoside 5'-triphosphate + ADP. The catalysed reaction is a ribonucleoside 5'-diphosphate + ATP = a ribonucleoside 5'-triphosphate + ADP. Its function is as follows. Major role in the synthesis of nucleoside triphosphates other than ATP. The ATP gamma phosphate is transferred to the NDP beta phosphate via a ping-pong mechanism, using a phosphorylated active-site intermediate. This is Nucleoside diphosphate kinase from Chlorobium luteolum (strain DSM 273 / BCRC 81028 / 2530) (Pelodictyon luteolum).